We begin with the raw amino-acid sequence, 180 residues long: Bifunctional protein PyrR (180 aa).

Positions 101-113 (VILVDDVLYTGRT) match the PRPP-binding motif.

This sequence belongs to the purine/pyrimidine phosphoribosyltransferase family. PyrR subfamily. In terms of assembly, homodimer and homohexamer; in equilibrium.

It catalyses the reaction UMP + diphosphate = 5-phospho-alpha-D-ribose 1-diphosphate + uracil. In terms of biological role, regulates transcriptional attenuation of the pyrimidine nucleotide (pyr) operon by binding in a uridine-dependent manner to specific sites on pyr mRNA. This disrupts an antiterminator hairpin in the RNA and favors formation of a downstream transcription terminator, leading to a reduced expression of downstream genes. Its function is as follows. Also displays a weak uracil phosphoribosyltransferase activity which is not physiologically significant. This chain is Bifunctional protein PyrR, found in Bacillus cytotoxicus (strain DSM 22905 / CIP 110041 / 391-98 / NVH 391-98).